We begin with the raw amino-acid sequence, 957 residues long: Histone-lysine N-methyltransferase, H3 lysine-9 specific SUVH3 (957 aa).

Positions glycine 73–glycine 243 constitute a YDG domain. The tract at residues glutamate 182–lysine 209 is disordered. Positions alanine 183 to alanine 198 are enriched in gly residues. The region spanning aspartate 319–lysine 441 is the Pre-SET domain. An SET domain is found at leucine 455 to glycine 920. 3 disordered regions span residues aspartate 552–glutamate 595, alanine 611–alanine 647, and proline 783–glycine 805. Over residues glutamine 560 to glycine 578 the composition is skewed to low complexity. A compositionally biased stretch (gly residues) spans glycine 793 to glycine 805. The Post-SET domain maps to phenylalanine 941–methionine 957.

It belongs to the class V-like SAM-binding methyltransferase superfamily. Histone-lysine methyltransferase family. Suvar3-9 subfamily.

The protein resides in the nucleus. Its subcellular location is the chromosome. The enzyme catalyses L-lysyl(9)-[histone H3] + S-adenosyl-L-methionine = N(6)-methyl-L-lysyl(9)-[histone H3] + S-adenosyl-L-homocysteine + H(+). Its function is as follows. Histone methyltransferase. Monomethylates specifically 'Lys-9' of histone H3. H3 'Lys-9Me1' (H3K9me1) functions as an epigenetic mark of repressed chromatin. This is Histone-lysine N-methyltransferase, H3 lysine-9 specific SUVH3 (SUVH3) from Chlamydomonas reinhardtii (Chlamydomonas smithii).